The chain runs to 106 residues: Small ribosomal subunit protein uS10 (106 aa).

Belongs to the universal ribosomal protein uS10 family. In terms of assembly, part of the 30S ribosomal subunit.

Its function is as follows. Involved in the binding of tRNA to the ribosomes. This is Small ribosomal subunit protein uS10 from Hyphomonas neptunium (strain ATCC 15444).